Consider the following 357-residue polypeptide: Glucose-6-phosphatase catalytic subunit 1 (357 aa).

Residues 1 to 28 (MEEGMNILHDFGIQSTRYLQVNYQDSQD) lie on the Lumenal side of the membrane. Residues 29-49 (WFILVSVIADLRNAFYVLFPI) form a helical membrane-spanning segment. The Cytoplasmic segment spans residues 50 to 60 (WFHLKETVGIN). Residues 61–81 (LLWVAVVGDWFNLVFKWILFG) traverse the membrane as a helical segment. The Lumenal portion of the chain corresponds to 82 to 117 (QRPYWWVLDTDYYSNSSVPIIKQFPVTCETGPGSPS). Residue Arg-83 coordinates substrate. N-linked (GlcNAc...) asparagine glycosylation is present at Asn-96. Residues 118 to 138 (GHAMGAAGVYYVMVTSTLAIF) form a helical membrane-spanning segment. Catalysis depends on His-119, which acts as the Proton donor. Residues 139-147 (RGKKKPTYG) lie on the Cytoplasmic side of the membrane. Residues 148 to 168 (FRCLNVILWLGFWAVQLNVCL) form a helical membrane-spanning segment. Over 169 to 179 (SRIYLAAHFPH) the chain is Lumenal. Arg-170 serves as a coordination point for substrate. The active-site Nucleophile is His-176. The helical transmembrane segment at 180–202 (QVVAGVLSGIAVAETFSHIRGIY) threads the bilayer. Residues 203–211 (NASLRKYCL) lie on the Cytoplasmic side of the membrane. A helical membrane pass occupies residues 212-232 (ITIFLFGFALGFYLLLKGLGV). Topologically, residues 233–254 (DLLWTLEKAKRWCERPEWVHLD) are lumenal. A helical membrane pass occupies residues 255–275 (TTPFASLFKNLGTLLGLGLAL). At 276–291 (NSSMYRKSCKGELSKL) the chain is on the cytoplasmic side. Residues 292–312 (LPFRFACIVASLVLLHLFDSL) traverse the membrane as a helical segment. The Lumenal portion of the chain corresponds to 313–320 (KPPSQVEL). Residues 321–341 (IFYILSFCKSATVPFASVSLI) form a helical membrane-spanning segment. Over 342-357 (PYCLARILGQTHKKSL) the chain is Cytoplasmic. The Prevents secretion from ER signature appears at 354–357 (KKSL).

This sequence belongs to the glucose-6-phosphatase family. As to expression, liver and kidney.

Its subcellular location is the endoplasmic reticulum membrane. The catalysed reaction is D-glucose 6-phosphate + H2O = D-glucose + phosphate. The protein operates within carbohydrate biosynthesis; gluconeogenesis. Hydrolyzes glucose-6-phosphate to glucose in the endoplasmic reticulum. Forms with the glucose-6-phosphate transporter (SLC37A4/G6PT) the complex responsible for glucose production in the terminal step of glycogenolysis and gluconeogenesis. Hence, it is the key enzyme in homeostatic regulation of blood glucose levels. The polypeptide is Glucose-6-phosphatase catalytic subunit 1 (G6pc1) (Mus musculus (Mouse)).